We begin with the raw amino-acid sequence, 326 residues long: Fructose-1,6-bisphosphatase class 1 2 (326 aa).

Residues glutamate 84, aspartate 103, leucine 105, and aspartate 106 each contribute to the Mg(2+) site. Substrate contacts are provided by residues 106–109, asparagine 198, and lysine 262; that span reads DGSS. Residue glutamate 268 coordinates Mg(2+).

This sequence belongs to the FBPase class 1 family. As to quaternary structure, homotetramer. Mg(2+) is required as a cofactor.

It localises to the cytoplasm. It catalyses the reaction beta-D-fructose 1,6-bisphosphate + H2O = beta-D-fructose 6-phosphate + phosphate. It participates in carbohydrate biosynthesis; gluconeogenesis. This chain is Fructose-1,6-bisphosphatase class 1 2, found in Pseudoalteromonas translucida (strain TAC 125).